A 300-amino-acid chain; its full sequence is MKIKKIMHNIFKGLITALITPFKDNKLDLYALERIVKHQIKYEVDAVLIAGSTGESSSLSFEEYKLLLQTSVEIVNKCIPIISGCSSNNTTYARALAAESTKIGVDGFMASPPSYVKPTQHGIYKHFEALHEACNLPIMLYSAPTRSGVDFSDETILRLSKLPRILALKDCGVDLERPLRIRATVKKDFNILTGNDEVVLAFNAQGGVGWTSVASNIVPNICKELLEKWNKNDTKGALEIHQKLLPLYTALFVESNPIPIKYAAHYLGLCENEIRPPLTEASDSAKKQIENIITSLSIKI.

Thr-53 lines the pyruvate pocket. The active-site Proton donor/acceptor is Tyr-141. The active-site Schiff-base intermediate with substrate is Lys-169. A pyruvate-binding site is contributed by Thr-211.

It belongs to the DapA family. Homotetramer; dimer of dimers.

It localises to the cytoplasm. The enzyme catalyses L-aspartate 4-semialdehyde + pyruvate = (2S,4S)-4-hydroxy-2,3,4,5-tetrahydrodipicolinate + H2O + H(+). Its pathway is amino-acid biosynthesis; L-lysine biosynthesis via DAP pathway; (S)-tetrahydrodipicolinate from L-aspartate: step 3/4. Functionally, catalyzes the condensation of (S)-aspartate-beta-semialdehyde [(S)-ASA] and pyruvate to 4-hydroxy-tetrahydrodipicolinate (HTPA). The protein is 4-hydroxy-tetrahydrodipicolinate synthase of Rickettsia massiliae (strain Mtu5).